Reading from the N-terminus, the 262-residue chain is Ribosomal RNA small subunit methyltransferase A (262 aa).

S-adenosyl-L-methionine contacts are provided by isoleucine 18, glycine 43, glutamate 65, aspartate 91, and asparagine 110.

Belongs to the class I-like SAM-binding methyltransferase superfamily. rRNA adenine N(6)-methyltransferase family. RsmA subfamily.

It is found in the cytoplasm. The catalysed reaction is adenosine(1518)/adenosine(1519) in 16S rRNA + 4 S-adenosyl-L-methionine = N(6)-dimethyladenosine(1518)/N(6)-dimethyladenosine(1519) in 16S rRNA + 4 S-adenosyl-L-homocysteine + 4 H(+). Functionally, specifically dimethylates two adjacent adenosines (A1518 and A1519) in the loop of a conserved hairpin near the 3'-end of 16S rRNA in the 30S particle. May play a critical role in biogenesis of 30S subunits. The sequence is that of Ribosomal RNA small subunit methyltransferase A from Ehrlichia ruminantium (strain Gardel).